Consider the following 240-residue polypeptide: Pyridoxine 5'-phosphate synthase (240 aa).

Asn7 contacts 3-amino-2-oxopropyl phosphate. 9–10 (DH) is a 1-deoxy-D-xylulose 5-phosphate binding site. A 3-amino-2-oxopropyl phosphate-binding site is contributed by Arg18. The active-site Proton acceptor is His43. The 1-deoxy-D-xylulose 5-phosphate site is built by Arg45 and His50. Residue Glu70 is the Proton acceptor of the active site. Thr100 is a binding site for 1-deoxy-D-xylulose 5-phosphate. His191 (proton donor) is an active-site residue. 3-amino-2-oxopropyl phosphate contacts are provided by residues Gly192 and 213-214 (GH).

Belongs to the PNP synthase family. As to quaternary structure, homooctamer; tetramer of dimers.

It is found in the cytoplasm. It catalyses the reaction 3-amino-2-oxopropyl phosphate + 1-deoxy-D-xylulose 5-phosphate = pyridoxine 5'-phosphate + phosphate + 2 H2O + H(+). It functions in the pathway cofactor biosynthesis; pyridoxine 5'-phosphate biosynthesis; pyridoxine 5'-phosphate from D-erythrose 4-phosphate: step 5/5. Its function is as follows. Catalyzes the complicated ring closure reaction between the two acyclic compounds 1-deoxy-D-xylulose-5-phosphate (DXP) and 3-amino-2-oxopropyl phosphate (1-amino-acetone-3-phosphate or AAP) to form pyridoxine 5'-phosphate (PNP) and inorganic phosphate. The sequence is that of Pyridoxine 5'-phosphate synthase from Coxiella burnetii (strain Dugway 5J108-111).